The following is a 92-amino-acid chain: Non-specific lipid-transfer protein B (92 aa).

Intrachain disulfides connect Cys3–Cys51, Cys13–Cys28, Cys29–Cys74, and Cys49–Cys88.

This sequence belongs to the plant LTP family.

In terms of biological role, plant non-specific lipid-transfer proteins transfer phospholipids as well as galactolipids across membranes. May play a role in wax or cutin deposition in the cell walls of expanding epidermal cells and certain secretory tissues. In Ricinus communis (Castor bean), this protein is Non-specific lipid-transfer protein B.